The following is a 124-amino-acid chain: Small ribosomal subunit protein uS12 (124 aa).

Asp-89 is modified (3-methylthioaspartic acid). The tract at residues 104–124 (ATGVKDRKQGRSKYGAKRPKE) is disordered. Residues 113–124 (GRSKYGAKRPKE) are compositionally biased toward basic residues.

This sequence belongs to the universal ribosomal protein uS12 family. In terms of assembly, part of the 30S ribosomal subunit. Contacts proteins S8 and S17. May interact with IF1 in the 30S initiation complex.

In terms of biological role, with S4 and S5 plays an important role in translational accuracy. Its function is as follows. Interacts with and stabilizes bases of the 16S rRNA that are involved in tRNA selection in the A site and with the mRNA backbone. Located at the interface of the 30S and 50S subunits, it traverses the body of the 30S subunit contacting proteins on the other side and probably holding the rRNA structure together. The combined cluster of proteins S8, S12 and S17 appears to hold together the shoulder and platform of the 30S subunit. The protein is Small ribosomal subunit protein uS12 of Picosynechococcus sp. (strain ATCC 27264 / PCC 7002 / PR-6) (Agmenellum quadruplicatum).